Here is a 65-residue protein sequence, read N- to C-terminus: Large ribosomal subunit protein bL35 (65 aa).

The protein belongs to the bacterial ribosomal protein bL35 family.

The chain is Large ribosomal subunit protein bL35 from Prochlorococcus marinus (strain NATL1A).